We begin with the raw amino-acid sequence, 1733 residues long: ATP-binding cassette sub-family A member 17 (1733 aa).

The next 7 membrane-spanning stretches (helical) occupy residues 22-42 (TLITLLEMLMPLLFCAIVLYL), 262-282 (FPLLLMLSFICVELIITNSVL), 306-326 (AWFITFFISVSITVSVMTVLF), 342-362 (TLIFIFLMCFAIATIFFAFMM), 372-392 (GTVIGGTVFFFTYLPYMYITF), 403-423 (ILSCLFSNVAMATGVRFISLF), and 444-464 (FAQVLGMLLLDSFLYCLIAFL). The ABC transporter 1 domain maps to 519-752 (IEIQHLYKVF…YGAGYYMTII (234 aa)). 555–562 (GHNGAGKT) contacts ATP. Residue Asn609 is glycosylated (N-linked (GlcNAc...) asparagine). The next 7 membrane-spanning stretches (helical) occupy residues 906–926 (LVLSVQVLLPLAIIMLSLTFF), 1082–1102 (LVVNFLFGIAFLSSSFSILTV), 1128–1148 (LLWDLISFLVPTLLLVLVFLW), 1160–1180 (IPAVVLIMMLYGWAVIPLVYT), 1192–1212 (CVKLVVMLTFLSISPVVLVTV), 1230–1250 (IFLILPGHCLGMALSNLYYNF), and 1287–1307 (IGKYLTALAVLGPVYITMLFL). One can recognise an ABC transporter 2 domain in the interval 1366-1599 (LVVKEVSKVY…FGISYSLQAK (234 aa)). Position 1401-1408 (1401-1408 (GLNGAGKT)) interacts with ATP. Residues 1681-1692 (ESSTKEQIQQEQ) show a composition bias toward polar residues. The segment at 1681 to 1733 (ESSTKEQIQQEQAVLASPSPPSNSRPISSPPSRLSSPTPKPLPSPPPSEPILL) is disordered. Residues 1704 to 1717 (SRPISSPPSRLSSP) are compositionally biased toward low complexity. Pro residues predominate over residues 1718 to 1733 (TPKPLPSPPPSEPILL).

This sequence belongs to the ABC transporter superfamily. ABCA family. Post-translationally, N-glycosylated. As to expression, in the testis, detected predominantly in elongated spermatids at the late stage of germ cell development and in sperm, with no expression detected in immature germ cells such as spermatogonia and spermatocytes or in somatic cells such as Sertoli cells (at protein level). Expressed in the head and tail midpiece of elongated spermatids and sperm (at protein level). Expressed exclusively in the testis.

It localises to the endoplasmic reticulum membrane. Its subcellular location is the cytoplasm. It carries out the reaction cholesterol(in) + ATP + H2O = cholesterol(out) + ADP + phosphate + H(+). In terms of biological role, promotes cholesterol efflux from sperm which renders sperm capable of fertilization. Has also been shown to decrease levels of intracellular esterified neutral lipids including cholesteryl esters, fatty acid esters and triacylglycerols. This is ATP-binding cassette sub-family A member 17 from Mus musculus (Mouse).